Here is a 337-residue protein sequence, read N- to C-terminus: Casein kinase I isoform alpha (337 aa).

The Protein kinase domain occupies 17–285 (YKLVRKIGSG…YLRQLFRILF (269 aa)). Residues 23 to 31 (IGSGSFGDI) and lysine 46 each bind ATP. Residue aspartate 136 is the Proton acceptor of the active site. Residues 309–325 (AASSSGQGQQAQTPTGK) show a composition bias toward low complexity. The tract at residues 309–337 (AASSSGQGQQAQTPTGKQTDKSKSNMKGF) is disordered.

It belongs to the protein kinase superfamily. CK1 Ser/Thr protein kinase family. Casein kinase I subfamily. Autophosphorylated.

Its subcellular location is the cytoplasm. It is found in the cytoskeleton. The protein localises to the microtubule organizing center. It localises to the centrosome. The protein resides in the chromosome. Its subcellular location is the centromere. It is found in the kinetochore. The protein localises to the nucleus speckle. It localises to the cilium basal body. The protein resides in the spindle. The catalysed reaction is L-seryl-[protein] + ATP = O-phospho-L-seryl-[protein] + ADP + H(+). It carries out the reaction L-threonyl-[protein] + ATP = O-phospho-L-threonyl-[protein] + ADP + H(+). In terms of biological role, casein kinases are operationally defined by their preferential utilization of acidic proteins such as caseins as substrates. It can phosphorylate a large number of proteins. Participates in Wnt signaling. May play a role in segregating chromosomes during mitosis. May play a role in keratin cytoskeleton disassembly. The protein is Casein kinase I isoform alpha (CSNK1A1) of Gallus gallus (Chicken).